The sequence spans 445 residues: Chromosomal replication initiator protein DnaA (445 aa).

The tract at residues 1–73 is domain I, interacts with DnaA modulators; it reads MSPNSTLWQT…NELATKYSST (73 aa). The tract at residues 73–102 is domain II; the sequence is TPVRLKFVSQEEVIEEPVADRKLTIDYRQG. The segment at 103-323 is domain III, AAA+ region; it reads NLNSTYTFDS…GALIRLISYA (221 aa). Glycine 147, glycine 149, lysine 150, and threonine 151 together coordinate ATP. Residues 324-445 form a domain IV, binds dsDNA region; that stretch reads QTFNLEITMN…KFAVDSIVKK (122 aa).

The protein belongs to the DnaA family. Oligomerizes as a right-handed, spiral filament on DNA at oriC.

It is found in the cytoplasm. Plays an essential role in the initiation and regulation of chromosomal replication. ATP-DnaA binds to the origin of replication (oriC) to initiate formation of the DNA replication initiation complex once per cell cycle. Binds the DnaA box (a 9 base pair repeat at the origin) and separates the double-stranded (ds)DNA. Forms a right-handed helical filament on oriC DNA; dsDNA binds to the exterior of the filament while single-stranded (ss)DNA is stabiized in the filament's interior. The ATP-DnaA-oriC complex binds and stabilizes one strand of the AT-rich DNA unwinding element (DUE), permitting loading of DNA polymerase. After initiation quickly degrades to an ADP-DnaA complex that is not apt for DNA replication. Binds acidic phospholipids. This is Chromosomal replication initiator protein DnaA from Acholeplasma laidlawii.